The primary structure comprises 202 residues: Imidazoleglycerol-phosphate dehydratase (202 aa).

The protein belongs to the imidazoleglycerol-phosphate dehydratase family.

It localises to the cytoplasm. It carries out the reaction D-erythro-1-(imidazol-4-yl)glycerol 3-phosphate = 3-(imidazol-4-yl)-2-oxopropyl phosphate + H2O. It participates in amino-acid biosynthesis; L-histidine biosynthesis; L-histidine from 5-phospho-alpha-D-ribose 1-diphosphate: step 6/9. The protein is Imidazoleglycerol-phosphate dehydratase of Rhizobium meliloti (strain 1021) (Ensifer meliloti).